Consider the following 155-residue polypeptide: MSRRGTVEEKTAKSDPIYRNRLVNMLVNRILKHGKKSLAYQILYRAVKKIQQKTETNPLSVLRQAIRGVTPDIAVKARRVGGSTHQVPIEIGSTQGKALAIRWLLGAARKRPGRNMAFKLSSELVDAAKGSGDAVRKKEETHRMAEANRAFAHFR.

As to quaternary structure, component of the chloroplast small ribosomal subunit (SSU). Mature 70S chloroplast ribosomes of higher plants consist of a small (30S) and a large (50S) subunit. The 30S small subunit contains 1 molecule of ribosomal RNA (16S rRNA) and 24 different proteins. The 50S large subunit contains 3 rRNA molecules (23S, 5S and 4.5S rRNA) and 33 different proteins.

The protein localises to the plastid. Its subcellular location is the chloroplast. Functionally, component of the chloroplast ribosome (chloro-ribosome), a dedicated translation machinery responsible for the synthesis of chloroplast genome-encoded proteins, including proteins of the transcription and translation machinery and components of the photosynthetic apparatus. This chain is Small ribosomal subunit protein uS7cz/uS7cy (rps7-A), found in Spinacia oleracea (Spinach).